The chain runs to 379 residues: MRIDEWLSSRLAKTKAAGLYRSLKLPQAERTNWASNDYLGLANDKRLIHAAETALRRFGAGSTGSRLTSGNTAWHEKLERKIAGFKQTEAALLFSSGYLANVGVLSSLPEKGDVILSDQLNHASIIDGCRLSKADTVVYRHKDMNDLEEKLRAAQSRARRFIVTDGVFSMDGTIAPLDEIMLLAKQYRAFVIVDDAHATGVLGEAGRGTSEYFGVSPDVVIGTLSKAVGAEGGFVAGSKTLIDFLLNHARTFIFQTAVPPASCAAACKALDIIEDSRAKRRLLQSSVNTIKRSLVDIGFTVNGEDTPIIPVMIGDPQKAVQFANGLKEKGIEAPAIRPPTVAEGESRIRLTVTAERRLKDIEDLLEGFKLMGRELNLVK.

Arg-21 provides a ligand contact to substrate. Residue 97-98 (GY) participates in pyridoxal 5'-phosphate binding. His-122 provides a ligand contact to substrate. Pyridoxal 5'-phosphate-binding positions include Ser-169, 194–197 (DDAH), and 223–226 (TLSK). Position 226 is an N6-(pyridoxal phosphate)lysine (Lys-226). Position 340 (Thr-340) interacts with substrate.

It belongs to the class-II pyridoxal-phosphate-dependent aminotransferase family. BioF subfamily. In terms of assembly, homodimer. It depends on pyridoxal 5'-phosphate as a cofactor.

The catalysed reaction is 6-carboxyhexanoyl-[ACP] + L-alanine + H(+) = (8S)-8-amino-7-oxononanoate + holo-[ACP] + CO2. Its pathway is cofactor biosynthesis; biotin biosynthesis. Its function is as follows. Catalyzes the decarboxylative condensation of pimeloyl-[acyl-carrier protein] and L-alanine to produce 8-amino-7-oxononanoate (AON), [acyl-carrier protein], and carbon dioxide. This is Putative 8-amino-7-oxononanoate synthase (bioF) from Bacillus licheniformis (strain ATCC 14580 / DSM 13 / JCM 2505 / CCUG 7422 / NBRC 12200 / NCIMB 9375 / NCTC 10341 / NRRL NRS-1264 / Gibson 46).